We begin with the raw amino-acid sequence, 305 residues long: tRNA pseudouridine synthase B (305 aa).

The active-site Nucleophile is Asp-48.

Belongs to the pseudouridine synthase TruB family. Type 1 subfamily.

It catalyses the reaction uridine(55) in tRNA = pseudouridine(55) in tRNA. Functionally, responsible for synthesis of pseudouridine from uracil-55 in the psi GC loop of transfer RNAs. This is tRNA pseudouridine synthase B from Pseudomonas putida (strain GB-1).